A 310-amino-acid polypeptide reads, in one-letter code: Homoserine kinase (310 aa).

91–101 (PIGSGLGSSAC) contributes to the ATP binding site.

The protein belongs to the GHMP kinase family. Homoserine kinase subfamily.

Its subcellular location is the cytoplasm. It carries out the reaction L-homoserine + ATP = O-phospho-L-homoserine + ADP + H(+). The protein operates within amino-acid biosynthesis; L-threonine biosynthesis; L-threonine from L-aspartate: step 4/5. In terms of biological role, catalyzes the ATP-dependent phosphorylation of L-homoserine to L-homoserine phosphate. This Escherichia coli (strain SE11) protein is Homoserine kinase.